We begin with the raw amino-acid sequence, 229 residues long: Meiotically up-regulated gene 31 protein (229 aa).

2 disordered regions span residues Glu16–Lys68 and Gly189–Ala229.

It localises to the endoplasmic reticulum. In terms of biological role, has a role in meiosis. In Schizosaccharomyces pombe (strain 972 / ATCC 24843) (Fission yeast), this protein is Meiotically up-regulated gene 31 protein (mug31).